The chain runs to 402 residues: Argininosuccinate synthase (402 aa).

Residues 13–21 (AYSGGLDTS) and Ala-40 each bind ATP. L-citrulline-binding residues include Tyr-91 and Ser-96. Gly-121 contacts ATP. Thr-123, Asn-127, and Asp-128 together coordinate L-aspartate. Asn-127 serves as a coordination point for L-citrulline. L-citrulline contacts are provided by Arg-131, Ser-180, Ser-189, Glu-265, and Tyr-277.

The protein belongs to the argininosuccinate synthase family. Type 1 subfamily. Homotetramer.

The protein resides in the cytoplasm. It carries out the reaction L-citrulline + L-aspartate + ATP = 2-(N(omega)-L-arginino)succinate + AMP + diphosphate + H(+). It functions in the pathway amino-acid biosynthesis; L-arginine biosynthesis; L-arginine from L-ornithine and carbamoyl phosphate: step 2/3. The sequence is that of Argininosuccinate synthase from Leptospira biflexa serovar Patoc (strain Patoc 1 / Ames).